A 160-amino-acid polypeptide reads, in one-letter code: Adenosine 5'-monophosphoramidase HINT3 (160 aa).

Positions 24 to 132 constitute an HIT domain; sequence IFCTIAKGDD…LAPYSQLYKW (109 aa). AMP contacts are provided by residues 50–51 and 119–121; these read DI and HLH. The short motif at 117–121 is the Histidine triad motif element; sequence HLHLH. The Tele-AMP-histidine intermediate role is filled by H119.

Belongs to the HINT family. In terms of assembly, forms dimers to octamers and even larger oligomer.

The protein resides in the cytoplasm. Its subcellular location is the nucleus. It catalyses the reaction adenosine 5'-phosphoramidate + H2O = AMP + NH4(+). Its function is as follows. Exhibits adenosine 5'-monophosphoramidase activity, hydrolyzing purine nucleotide phosphoramidates with a single phosphate group such as adenosine 5'monophosphoramidate (AMP-NH2) to yield AMP and NH2. Hydrolyzes lysyl-AMP (AMP-N-epsilon-(N-alpha-acetyl lysine methyl ester)) generated by lysine tRNA ligase. The sequence is that of Adenosine 5'-monophosphoramidase HINT3 (hint3) from Danio rerio (Zebrafish).